Consider the following 750-residue polypeptide: NAD(P)H-quinone oxidoreductase subunit 5, chloroplastic (750 aa).

16 helical membrane passes run 9-29 (WIIP…LLLF), 40-60 (WAFT…NLSI), 89-109 (IDPL…MVLI), 125-145 (FAYM…SNLI), 147-167 (IYIF…FWFT), 185-205 (GDFG…SFEF), 230-250 (AALL…HIWL), 258-278 (TPIS…FLVA), 283-303 (LFIV…ITVL), 327-347 (LGYM…FHLI), 354-374 (ALLF…VGYS), 396-416 (TSFL…CFWS), 425-445 (WLYS…TAFY), 548-568 (LFPL…GIPF), 607-627 (IFSV…YKPI), and 724-744 (LFFY…FYLF).

Belongs to the complex I subunit 5 family. In terms of assembly, NDH is composed of at least 16 different subunits, 5 of which are encoded in the nucleus.

The protein resides in the plastid. The protein localises to the chloroplast thylakoid membrane. It carries out the reaction a plastoquinone + NADH + (n+1) H(+)(in) = a plastoquinol + NAD(+) + n H(+)(out). It catalyses the reaction a plastoquinone + NADPH + (n+1) H(+)(in) = a plastoquinol + NADP(+) + n H(+)(out). Functionally, NDH shuttles electrons from NAD(P)H:plastoquinone, via FMN and iron-sulfur (Fe-S) centers, to quinones in the photosynthetic chain and possibly in a chloroplast respiratory chain. The immediate electron acceptor for the enzyme in this species is believed to be plastoquinone. Couples the redox reaction to proton translocation, and thus conserves the redox energy in a proton gradient. In Tecoma stans (Yellow bells), this protein is NAD(P)H-quinone oxidoreductase subunit 5, chloroplastic (ndhF).